The sequence spans 252 residues: 5'-nucleotidase SurE (252 aa).

Aspartate 8, aspartate 9, serine 40, and asparagine 92 together coordinate a divalent metal cation.

The protein belongs to the SurE nucleotidase family. The cofactor is a divalent metal cation.

Its subcellular location is the cytoplasm. It carries out the reaction a ribonucleoside 5'-phosphate + H2O = a ribonucleoside + phosphate. In terms of biological role, nucleotidase that shows phosphatase activity on nucleoside 5'-monophosphates. The polypeptide is 5'-nucleotidase SurE (Chelativorans sp. (strain BNC1)).